We begin with the raw amino-acid sequence, 470 residues long: ATP synthase subunit beta (470 aa).

Position 156 to 163 (156 to 163) interacts with ATP; the sequence is GGAGVGKT.

This sequence belongs to the ATPase alpha/beta chains family. In terms of assembly, F-type ATPases have 2 components, CF(1) - the catalytic core - and CF(0) - the membrane proton channel. CF(1) has five subunits: alpha(3), beta(3), gamma(1), delta(1), epsilon(1). CF(0) has three main subunits: a(1), b(2) and c(9-12). The alpha and beta chains form an alternating ring which encloses part of the gamma chain. CF(1) is attached to CF(0) by a central stalk formed by the gamma and epsilon chains, while a peripheral stalk is formed by the delta and b chains.

The protein localises to the cell inner membrane. It carries out the reaction ATP + H2O + 4 H(+)(in) = ADP + phosphate + 5 H(+)(out). In terms of biological role, produces ATP from ADP in the presence of a proton gradient across the membrane. The catalytic sites are hosted primarily by the beta subunits. The polypeptide is ATP synthase subunit beta (Thermosipho africanus (strain TCF52B)).